Here is a 327-residue protein sequence, read N- to C-terminus: Beta-ketoacyl-[acyl-carrier-protein] synthase III (327 aa).

Active-site residues include cysteine 114 and histidine 254. Positions 255-259 (QANQR) are ACP-binding. Asparagine 284 is an active-site residue.

It belongs to the thiolase-like superfamily. FabH family. Homodimer.

Its subcellular location is the cytoplasm. The enzyme catalyses malonyl-[ACP] + acetyl-CoA + H(+) = 3-oxobutanoyl-[ACP] + CO2 + CoA. The protein operates within lipid metabolism; fatty acid biosynthesis. In terms of biological role, catalyzes the condensation reaction of fatty acid synthesis by the addition to an acyl acceptor of two carbons from malonyl-ACP. Catalyzes the first condensation reaction which initiates fatty acid synthesis and may therefore play a role in governing the total rate of fatty acid production. Possesses both acetoacetyl-ACP synthase and acetyl transacylase activities. Its substrate specificity determines the biosynthesis of branched-chain and/or straight-chain of fatty acids. The polypeptide is Beta-ketoacyl-[acyl-carrier-protein] synthase III (Levilactobacillus brevis (strain ATCC 367 / BCRC 12310 / CIP 105137 / JCM 1170 / LMG 11437 / NCIMB 947 / NCTC 947) (Lactobacillus brevis)).